The following is a 401-amino-acid chain: Imidazolonepropionase (401 aa).

Fe(3+) contacts are provided by H66 and H68. H66 and H68 together coordinate Zn(2+). 4-imidazolone-5-propanoate contacts are provided by R75, Y138, and H171. N-formimidoyl-L-glutamate is bound at residue Y138. Residue H236 coordinates Fe(3+). Zn(2+) is bound at residue H236. Q239 contributes to the 4-imidazolone-5-propanoate binding site. Position 311 (D311) interacts with Fe(3+). Zn(2+) is bound at residue D311. N313 and G315 together coordinate N-formimidoyl-L-glutamate. Position 316 (T316) interacts with 4-imidazolone-5-propanoate.

It belongs to the metallo-dependent hydrolases superfamily. HutI family. The cofactor is Zn(2+). Requires Fe(3+) as cofactor.

It is found in the cytoplasm. The catalysed reaction is 4-imidazolone-5-propanoate + H2O = N-formimidoyl-L-glutamate. It participates in amino-acid degradation; L-histidine degradation into L-glutamate; N-formimidoyl-L-glutamate from L-histidine: step 3/3. Its function is as follows. Catalyzes the hydrolytic cleavage of the carbon-nitrogen bond in imidazolone-5-propanoate to yield N-formimidoyl-L-glutamate. It is the third step in the universal histidine degradation pathway. The chain is Imidazolonepropionase from Pseudomonas syringae pv. tomato (strain ATCC BAA-871 / DC3000).